Consider the following 220-residue polypeptide: Translation initiation factor 6 (220 aa).

Belongs to the eIF-6 family.

Functionally, binds to the 50S ribosomal subunit and prevents its association with the 30S ribosomal subunit to form the 70S initiation complex. The protein is Translation initiation factor 6 of Pyrobaculum arsenaticum (strain DSM 13514 / JCM 11321 / PZ6).